The following is a 295-amino-acid chain: Acetaldehyde dehydrogenase (295 aa).

11 to 14 is a binding site for NAD(+); it reads SGNI. The active-site Acyl-thioester intermediate is Cys127. NAD(+)-binding positions include 158-166 and Asn269; that span reads SAGPGTRSN.

The protein belongs to the acetaldehyde dehydrogenase family.

The catalysed reaction is acetaldehyde + NAD(+) + CoA = acetyl-CoA + NADH + H(+). The sequence is that of Acetaldehyde dehydrogenase from Brevibacillus brevis (strain 47 / JCM 6285 / NBRC 100599).